Here is a 271-residue protein sequence, read N- to C-terminus: Phosphate import ATP-binding protein PstB (271 aa).

The ABC transporter domain occupies 25–266; sequence FDTKNLNLWY…PSDKRTEDYI (242 aa). ATP is bound at residue 57 to 64; the sequence is GPSGCGKS.

The protein belongs to the ABC transporter superfamily. Phosphate importer (TC 3.A.1.7) family. As to quaternary structure, the complex is composed of two ATP-binding proteins (PstB), two transmembrane proteins (PstC and PstA) and a solute-binding protein (PstS).

The protein localises to the cell membrane. The catalysed reaction is phosphate(out) + ATP + H2O = ADP + 2 phosphate(in) + H(+). Part of the ABC transporter complex PstSACB involved in phosphate import. Responsible for energy coupling to the transport system. This Bacillus cereus (strain ATCC 14579 / DSM 31 / CCUG 7414 / JCM 2152 / NBRC 15305 / NCIMB 9373 / NCTC 2599 / NRRL B-3711) protein is Phosphate import ATP-binding protein PstB.